Here is a 340-residue protein sequence, read N- to C-terminus: Tryptophan--tRNA ligase (340 aa).

ATP-binding positions include 11-13 (RPT) and 19-20 (GH). The 'HIGH' region signature appears at 12 to 20 (PTGKLHLGH). L-tryptophan is bound at residue aspartate 140. ATP is bound by residues 152 to 154 (GND), leucine 194, and 202 to 206 (KMSKS). A 'KMSKS' region motif is present at residues 202-206 (KMSKS).

Belongs to the class-I aminoacyl-tRNA synthetase family. In terms of assembly, homodimer.

It is found in the cytoplasm. It carries out the reaction tRNA(Trp) + L-tryptophan + ATP = L-tryptophyl-tRNA(Trp) + AMP + diphosphate + H(+). Functionally, catalyzes the attachment of tryptophan to tRNA(Trp). This is Tryptophan--tRNA ligase from Streptococcus pyogenes serotype M3 (strain ATCC BAA-595 / MGAS315).